Consider the following 154-residue polypeptide: CASP-like protein 5B2 (154 aa).

The Cytoplasmic portion of the chain corresponds to 1–17 (MAGLAGRPGSWGGLVLR). Residues 18–38 (VGQALFAAACIGVMGSSLGFA) traverse the membrane as a helical segment. Topologically, residues 39-42 (SYTA) are extracellular. A helical transmembrane segment spans residues 43-63 (FCYLIASMGLQMLWSFGLACL). The Cytoplasmic segment spans residues 64 to 87 (DGYAIRANKDLTSPILLSLFVVGD). The chain crosses the membrane as a helical span at residues 88–107 (WVTAILSFAASSSAAGVVIL). The Extracellular segment spans residues 108-130 (FQKDVLFCRRYPQLPCGKYELAT). A helical membrane pass occupies residues 131-151 (AFAFLSWALSATSALIMFWLL). Over 152–154 (AAF) the chain is Cytoplasmic.

Belongs to the Casparian strip membrane proteins (CASP) family. As to quaternary structure, homodimer and heterodimers.

It localises to the cell membrane. This is CASP-like protein 5B2 from Zea mays (Maize).